Reading from the N-terminus, the 563-residue chain is Beta-catenin-like protein 1 (563 aa).

Met-1 carries the N-acetylmethionine modification. The tract at residues 1–49 is disordered; the sequence is MDVGELLSYQPNRGTKRPRDDEEEELKMRRRQAGTRERGRYREEEMTVV. Residues 16 to 33 carry the Nuclear localization signal motif; the sequence is KRPRDDEEEELKMRRRQA. Basic and acidic residues predominate over residues 34 to 45; sequence GTRERGRYREEE. HEAT repeat units lie at residues 79–129 and 134–176; these read ESSV…VVAT and YHLL…TLHE. An N6-acetyllysine modification is found at Lys-91. Residues 130–140 carry the Nuclear export signal (NES) motif; it reads MPDLYHLLVEL. ARM repeat units follow at residues 178–228, 229–273, 274–323, 325–363, and 364–417; these read EEGA…MAEF, RPEM…LQDN, DENR…CLML, SNRE…AMIG, and PEGT…LLRN. Ser-389 is modified (phosphoserine). Residues 476–540 adopt a coiled-coil conformation; that stretch reads DIEDEFYLRR…HIIKEYAENI (65 aa). Ser-545 carries the phosphoserine modification.

Component of the PRP19-CDC5L splicing complex composed of a core complex comprising a homotetramer of PRPF19, CDC5L, PLRG1 and BCAS2, and at least three less stably associated proteins CTNNBL1, CWC15 and HSPA8. Interacts directly with CWC15 and CDC5L in the complex. Interacts with AICDA; the interaction is important for the antibody diversification activity of AICDA. Interacts with PRPF31 (via its NLS). Interacts (via its N-terminal NLS) with KPNA1 and KPNA2.

The protein resides in the nucleus. Component of the PRP19-CDC5L complex that forms an integral part of the spliceosome and is required for activating pre-mRNA splicing. Participates in AID/AICDA-mediated somatic hypermutation (SHM) and class-switch recombination (CSR), 2 processes resulting in the production of high-affinity, mutated isotype-switched antibodies. The sequence is that of Beta-catenin-like protein 1 (CTNNBL1) from Bos taurus (Bovine).